A 528-amino-acid polypeptide reads, in one-letter code: Glutamyl-tRNA(Gln) amidotransferase subunit A, mitochondrial (528 aa).

Residue Lys76 is the Charge relay system of the active site. The tract at residues 148 to 167 (YREKRKQNPHSENEDSDWLI) is disordered. The active-site Charge relay system is Ser171. Residue Ser195 is the Acyl-ester intermediate of the active site.

Belongs to the amidase family. GatA subfamily. In terms of assembly, subunit of the heterotrimeric GatCAB amidotransferase (AdT) complex, composed of A (QRSL1), B (GATB) and C (GATC) subunits.

It localises to the mitochondrion. The enzyme catalyses L-glutamyl-tRNA(Gln) + L-glutamine + ATP + H2O = L-glutaminyl-tRNA(Gln) + L-glutamate + ADP + phosphate + H(+). Functionally, allows the formation of correctly charged Gln-tRNA(Gln) through the transamidation of misacylated Glu-tRNA(Gln) in the mitochondria. The reaction takes place in the presence of glutamine and ATP through an activated gamma-phospho-Glu-tRNA(Gln). In Homo sapiens (Human), this protein is Glutamyl-tRNA(Gln) amidotransferase subunit A, mitochondrial.